A 432-amino-acid chain; its full sequence is Glutamate-1-semialdehyde 2,1-aminomutase 1 (432 aa).

Lys272 carries the post-translational modification N6-(pyridoxal phosphate)lysine.

It belongs to the class-III pyridoxal-phosphate-dependent aminotransferase family. HemL subfamily. In terms of assembly, homodimer. Pyridoxal 5'-phosphate serves as cofactor.

It is found in the cytoplasm. The catalysed reaction is (S)-4-amino-5-oxopentanoate = 5-aminolevulinate. The protein operates within porphyrin-containing compound metabolism; protoporphyrin-IX biosynthesis; 5-aminolevulinate from L-glutamyl-tRNA(Glu): step 2/2. The sequence is that of Glutamate-1-semialdehyde 2,1-aminomutase 1 from Exiguobacterium sp. (strain ATCC BAA-1283 / AT1b).